We begin with the raw amino-acid sequence, 133 residues long: Small ribosomal subunit protein uS8 (133 aa).

The protein belongs to the universal ribosomal protein uS8 family. In terms of assembly, part of the 30S ribosomal subunit. Contacts proteins S5 and S12.

One of the primary rRNA binding proteins, it binds directly to 16S rRNA central domain where it helps coordinate assembly of the platform of the 30S subunit. This Deinococcus geothermalis (strain DSM 11300 / CIP 105573 / AG-3a) protein is Small ribosomal subunit protein uS8.